A 189-amino-acid chain; its full sequence is MSDSSKEKKKKFADMVSRQKGDDQQSDNHKQTDDLNEDLNTLKERAVQLEDHLRRAVADNENVKRIMQKQISDASDYAVTKLARDMIDSCDNLKRVMEILKDGDPVHEGIKVAYQKIINDLKKHGIEEVDPLGELFDSNLHQAVVEREDNEKKPGTIVEVLQTGYTIKNRLLRPAMVILSKKSADCGSD.

Residues 1–37 (MSDSSKEKKKKFADMVSRQKGDDQQSDNHKQTDDLNE) are disordered. The segment covering 17 to 33 (SRQKGDDQQSDNHKQTD) has biased composition (basic and acidic residues).

The protein belongs to the GrpE family. Homodimer.

It localises to the cytoplasm. Its function is as follows. Participates actively in the response to hyperosmotic and heat shock by preventing the aggregation of stress-denatured proteins, in association with DnaK and GrpE. It is the nucleotide exchange factor for DnaK and may function as a thermosensor. Unfolded proteins bind initially to DnaJ; upon interaction with the DnaJ-bound protein, DnaK hydrolyzes its bound ATP, resulting in the formation of a stable complex. GrpE releases ADP from DnaK; ATP binding to DnaK triggers the release of the substrate protein, thus completing the reaction cycle. Several rounds of ATP-dependent interactions between DnaJ, DnaK and GrpE are required for fully efficient folding. This chain is Protein GrpE, found in Wolbachia sp. subsp. Drosophila simulans (strain wRi).